A 500-amino-acid chain; its full sequence is Intracellular exo-alpha-(1-&gt;5)-L-arabinofuranosidase 1 (500 aa).

Residues glutamate 27, asparagine 72, and asparagine 172 each coordinate alpha-L-arabinofuranose. Glutamate 173 (proton donor/acceptor) is an active-site residue. The alpha-L-arabinofuranose site is built by tyrosine 244, glutamate 292, and glutamine 349. Glutamate 292 serves as the catalytic Nucleophile.

It belongs to the glycosyl hydrolase 51 family. Homohexamer; trimer of dimers.

The protein resides in the cytoplasm. It carries out the reaction Hydrolysis of terminal non-reducing alpha-L-arabinofuranoside residues in alpha-L-arabinosides.. It catalyses the reaction (20S)-ginsenoside Rc + H2O = L-arabinofuranose + (20S)-ginsenoside Rd. The protein operates within glycan metabolism; L-arabinan degradation. With respect to regulation, at a concentration of 5 mM, K(+), Cu(2+) and Ni(2+) exhibit inhibitory effects on the activity. Additionally, the chemical reagent SDS also displays a certain degree of inhibition. Enzymatic activity is largely unaffected by product feedback inhibition. Functionally, involved in the degradation of arabinan and is a key enzyme in the complete degradation of the plant cell wall. Catalyzes the cleavage of terminal alpha-(1-&gt;5)-arabinofuranosyl bonds in different hemicellulosic homopolysaccharides (branched and debranched arabinans). It acts preferentially on arabinotriose, arabinobiose and linear alpha-(1-&gt;5)-L-arabinan, and is much less effective on branched sugar beet arabinan. When expressed in E.coli, the recombinant enyzme can hydrolyze, with relatively low catalytic efficiency, the terminal alpha-L-arabinofuranoside at the C20 position of ginsenoside Rc to produce ginsenoside Rd, a rare ginsenoside that exhibits diverse and powerful pharmacological activities. This chain is Intracellular exo-alpha-(1-&gt;5)-L-arabinofuranosidase 1, found in Bacillus subtilis (strain 168).